Reading from the N-terminus, the 98-residue chain is ESAT-6-like protein EsxW (98 aa).

The protein belongs to the WXG100 family. CFP-10 subfamily. As to quaternary structure, forms a tight 1:1 complex with EsxV. The complex is destabilized at low pH. Unfolding of the proteins is required for dissociation of the complex and membrane binding.

The protein localises to the secreted. This chain is ESAT-6-like protein EsxW, found in Mycobacterium tuberculosis (strain ATCC 25618 / H37Rv).